The primary structure comprises 421 residues: Testin (421 aa).

The region spanning 92–199 (MILTNPVAAK…GDVKLPCEMD (108 aa)) is the PET domain. The segment at 133-164 (EKQPVAGSEGAQYRKKQLAKQLPAHDQDPSKC) is disordered. A compositionally biased stretch (basic and acidic residues) spans 155 to 164 (PAHDQDPSKC). LIM zinc-binding domains lie at 234–297 (YSCY…CDSE), 299–359 (PRCA…NHAV), and 362–421 (QGCH…KMMS).

This sequence belongs to the prickle / espinas / testin family. Interacts via LIM domain 1 with ZYX. Interacts (via LIM domain 3) with ENAH and VASP. Interacts with ALKBH4, talin, actin, alpha-actinin, GRIP1 and PXN. Interacts (via LIM domain 2) with ACTL7A (via N-terminus). Heterodimer with ACTL7A; the heterodimer interacts with ENAH to form a heterotrimer.

The protein resides in the cytoplasm. It is found in the cell junction. It localises to the focal adhesion. Functionally, scaffold protein that may play a role in cell adhesion, cell spreading and in the reorganization of the actin cytoskeleton. Plays a role in the regulation of cell proliferation. May act as a tumor suppressor. In Aotus nancymaae (Ma's night monkey), this protein is Testin (TES).